A 559-amino-acid polypeptide reads, in one-letter code: Mercuric reductase (559 aa).

Residues 1 to 64 (MYLNITGMTC…AVAGLGYKAT (64 aa)) enclose the HMA domain. The a metal cation site is built by Cys-10 and Cys-13. The FAD site is built by Ala-108, Gly-128, and Thr-133. A disulfide bridge links Cys-134 with Cys-139. Lys-143, Ala-209, Asp-401, and Val-409 together coordinate FAD. Cys-556 and Cys-557 together coordinate Hg(2+).

This sequence belongs to the class-I pyridine nucleotide-disulfide oxidoreductase family. As to quaternary structure, homodimer. FAD is required as a cofactor.

It carries out the reaction Hg + NADP(+) + H(+) = Hg(2+) + NADPH. Resistance to Hg(2+) in bacteria appears to be governed by a specialized system which includes mercuric reductase. MerA protein is responsible for volatilizing mercury as Hg(0). The polypeptide is Mercuric reductase (merA) (Alcaligenes sp).